A 508-amino-acid polypeptide reads, in one-letter code: Photosystem II CP47 reaction center protein (508 aa).

The next 6 membrane-spanning stretches (helical) occupy residues 21–36 (SVHI…WAGS), 101–115 (IVFS…IWHW), 140–156 (GIHL…FGAF), 203–218 (IAAG…FHLS), 237–252 (VLSS…AFVV), and 457–472 (SFAL…HGAR).

This sequence belongs to the PsbB/PsbC family. PsbB subfamily. As to quaternary structure, PSII is composed of 1 copy each of membrane proteins PsbA, PsbB, PsbC, PsbD, PsbE, PsbF, PsbH, PsbI, PsbJ, PsbK, PsbL, PsbM, PsbT, PsbX, PsbY, PsbZ, Psb30/Ycf12, at least 3 peripheral proteins of the oxygen-evolving complex and a large number of cofactors. It forms dimeric complexes. Binds multiple chlorophylls. PSII binds additional chlorophylls, carotenoids and specific lipids. is required as a cofactor.

It localises to the plastid. It is found in the chloroplast thylakoid membrane. One of the components of the core complex of photosystem II (PSII). It binds chlorophyll and helps catalyze the primary light-induced photochemical processes of PSII. PSII is a light-driven water:plastoquinone oxidoreductase, using light energy to abstract electrons from H(2)O, generating O(2) and a proton gradient subsequently used for ATP formation. In Carica papaya (Papaya), this protein is Photosystem II CP47 reaction center protein.